The following is a 107-amino-acid chain: Phosphoribosyl-ATP pyrophosphatase (107 aa).

Belongs to the PRA-PH family.

The protein localises to the cytoplasm. The catalysed reaction is 1-(5-phospho-beta-D-ribosyl)-ATP + H2O = 1-(5-phospho-beta-D-ribosyl)-5'-AMP + diphosphate + H(+). The protein operates within amino-acid biosynthesis; L-histidine biosynthesis; L-histidine from 5-phospho-alpha-D-ribose 1-diphosphate: step 2/9. This is Phosphoribosyl-ATP pyrophosphatase from Sinorhizobium medicae (strain WSM419) (Ensifer medicae).